Here is a 193-residue protein sequence, read N- to C-terminus: NADH-quinone oxidoreductase subunit B (193 aa).

4 residues coordinate [4Fe-4S] cluster: Cys-72, Cys-73, Cys-137, and Cys-167.

The protein belongs to the complex I 20 kDa subunit family. In terms of assembly, NDH-1 is composed of 14 different subunits. Subunits NuoB, C, D, E, F, and G constitute the peripheral sector of the complex. It depends on [4Fe-4S] cluster as a cofactor.

The protein resides in the cell inner membrane. The catalysed reaction is a quinone + NADH + 5 H(+)(in) = a quinol + NAD(+) + 4 H(+)(out). Its function is as follows. NDH-1 shuttles electrons from NADH, via FMN and iron-sulfur (Fe-S) centers, to quinones in the respiratory chain. The immediate electron acceptor for the enzyme in this species is believed to be ubiquinone. Couples the redox reaction to proton translocation (for every two electrons transferred, four hydrogen ions are translocated across the cytoplasmic membrane), and thus conserves the redox energy in a proton gradient. This is NADH-quinone oxidoreductase subunit B from Bartonella henselae (strain ATCC 49882 / DSM 28221 / CCUG 30454 / Houston 1) (Rochalimaea henselae).